A 134-amino-acid chain; its full sequence is MTLNIRVIAPDRTVWDANAEEVILPSSTGQVGILKGHIPLLTAIDIGVMRVRIEKEWQPIILLGGFAEVKDDKITILVNGAEEVSKIEIKAAKENLEKATKILNEARNDKDKIEATQNLRRARARIQAANVLAN.

The protein belongs to the ATPase epsilon chain family. As to quaternary structure, F-type ATPases have 2 components, CF(1) - the catalytic core - and CF(0) - the membrane proton channel. CF(1) has five subunits: alpha(3), beta(3), gamma(1), delta(1), epsilon(1). CF(0) has three main subunits: a, b and c.

Its subcellular location is the plastid. It is found in the chloroplast thylakoid membrane. Its function is as follows. Produces ATP from ADP in the presence of a proton gradient across the membrane. This chain is ATP synthase epsilon chain, chloroplastic, found in Gracilaria tenuistipitata var. liui (Red alga).